A 1226-amino-acid polypeptide reads, in one-letter code: Arf guanine nucleotide exchange factor SYT1 (1226 aa).

Disordered stretches follow at residues 17 to 39 (HSND…DKLR) and 113 to 158 (RNGQ…RNSK). Over residues 131-142 (SIEKVPKPDGER) the composition is skewed to basic and acidic residues. Thr-277 is modified (phosphothreonine). 3 disordered regions span residues 311–405 (NSLM…TGMS), 954–1022 (STGS…NEDY), and 1178–1198 (LEHG…DGID). Positions 349–360 (LSRSRSQSTSFV) are enriched in polar residues. Phosphoserine is present on Ser-369. Polar residues predominate over residues 386 to 405 (GPTSVYNNKSNANSTITGMS). The SEC7 domain occupies 405–620 (SRRSSSIVNA…TYFYENVTAK (216 aa)). The region spanning 844 to 1074 (ILQMGAIMNL…DSINLFSAYD (231 aa)) is the PH domain. 2 stretches are compositionally biased toward low complexity: residues 956–969 (GSHT…SSSA) and 994–1017 (SSVS…SSND).

The protein resides in the cytoplasm. Inhibited by brefeldin A. Functionally, guanine nucleotide exchange factor for Arf GTPases, stimulating the nucleotide exchange from the GDP-bound to the GTP-bound form. Catalyzes both the GDP release by and the GTP binding to ARF2. Has no exchange activity on Rab GTPases. Involved in vesicular transport. This chain is Arf guanine nucleotide exchange factor SYT1 (SYT1), found in Saccharomyces cerevisiae (strain ATCC 204508 / S288c) (Baker's yeast).